A 285-amino-acid chain; its full sequence is Polyamine aminopropyltransferase (285 aa).

One can recognise a PABS domain in the interval 5–241; sequence DSWFTEHFQA…GWWSVTLSSK (237 aa). Gln-35 is a binding site for S-methyl-5'-thioadenosine. Positions 66 and 90 each coordinate spermidine. S-methyl-5'-thioadenosine is bound by residues Asp-110 and 141–142; that span reads DG. The Proton acceptor role is filled by Asp-160. Spermidine is bound at residue 160–163; the sequence is DSTD. Residue Pro-167 coordinates S-methyl-5'-thioadenosine.

It belongs to the spermidine/spermine synthase family. Homodimer or homotetramer.

It localises to the cytoplasm. It carries out the reaction S-adenosyl 3-(methylsulfanyl)propylamine + putrescine = S-methyl-5'-thioadenosine + spermidine + H(+). The protein operates within amine and polyamine biosynthesis; spermidine biosynthesis; spermidine from putrescine: step 1/1. Its function is as follows. Catalyzes the irreversible transfer of a propylamine group from the amino donor S-adenosylmethioninamine (decarboxy-AdoMet) to putrescine (1,4-diaminobutane) to yield spermidine. The protein is Polyamine aminopropyltransferase of Xylella fastidiosa (strain 9a5c).